Here is a 141-residue protein sequence, read N- to C-terminus: MAKKIQGYIRLQLPAGAANPAPPVGPALGAQGVNIMAFCKDFNARTKDQNGMILPVVITVYTDKSFTFILKSPPASVLLKKAANIATGSGKPNQDRVGKVTKKQCAEIWKLKKADMNAKDEAAGIKTIAGTARQMGIEVVD.

This sequence belongs to the universal ribosomal protein uL11 family. As to quaternary structure, part of the ribosomal stalk of the 50S ribosomal subunit. Interacts with L10 and the large rRNA to form the base of the stalk. L10 forms an elongated spine to which L12 dimers bind in a sequential fashion forming a multimeric L10(L12)X complex. One or more lysine residues are methylated.

In terms of biological role, forms part of the ribosomal stalk which helps the ribosome interact with GTP-bound translation factors. The protein is Large ribosomal subunit protein uL11 of Opitutus terrae (strain DSM 11246 / JCM 15787 / PB90-1).